The chain runs to 589 residues: Leucine-rich repeat and immunoglobulin-like domain-containing nogo receptor-interacting protein 3 (589 aa).

Positions 1 to 23 (MTCWLHMLGLHLLLLPTAPLAAG) are cleaved as a signal peptide. The LRRNT domain occupies 24–53 (CPARCECSASTRTVACGRRRLTAIPEGIPA). At 24–528 (CPARCECSAS…LDLTTILVST (505 aa)) the chain is on the extracellular side. LRR repeat units follow at residues 54–75 (ETRM…DLAS), 78–99 (TLEE…AFAN), 102–123 (RLRV…VFTH), 126–147 (SLTL…SFQD), 150–171 (SLQR…AFAG), 174–195 (GLAE…SLGH), 206–227 (HLAI…SHLE), 246–267 (NLTS…ALRQ), 270–291 (HLTC…SFRD), 294–315 (RLRE…AFVG), and 318–339 (QIRL…TFHS). N-linked (GlcNAc...) asparagine glycosylation is present at N184. N-linked (GlcNAc...) asparagine glycans are attached at residues N246, N256, and N275. N323 is a glycosylation site (N-linked (GlcNAc...) asparagine). One can recognise an LRRCT domain in the interval 351 to 405 (NPLACDCRLLWIVQRRKTLNFDGRLPACATPAEVRGDALHNLPDSVLFEYFVCRK). The 90-residue stretch at 406–495 (PKIRERRLQH…GNDTYFATLT (90 aa)) folds into the Ig-like C2-type domain. A disulfide bond links C428 and C479. N-linked (GlcNAc...) asparagine glycosylation is found at N487, N501, and N509. The chain crosses the membrane as a helical span at residues 529–549 (AMGCITFLGVVLFCFLLLFVW). At 550–589 (SRGRGQHKNNFSVEYSFRKVDGPAAAAGQGGARKFNMKMI) the chain is on the cytoplasmic side.

It localises to the membrane. This chain is Leucine-rich repeat and immunoglobulin-like domain-containing nogo receptor-interacting protein 3 (Lingo3), found in Mus musculus (Mouse).